The sequence spans 230 residues: Flagellar L-ring protein (230 aa).

The signal sequence occupies residues 1 to 18 (MNRLNIAVSCLATALLFG). Cys19 carries N-palmitoyl cysteine lipidation. Cys19 carries S-diacylglycerol cysteine lipidation.

Belongs to the FlgH family. As to quaternary structure, the basal body constitutes a major portion of the flagellar organelle and consists of four rings (L,P,S, and M) mounted on a central rod.

Its subcellular location is the cell outer membrane. It localises to the bacterial flagellum basal body. Assembles around the rod to form the L-ring and probably protects the motor/basal body from shearing forces during rotation. This chain is Flagellar L-ring protein, found in Legionella pneumophila (strain Paris).